Consider the following 320-residue polypeptide: Methionyl-tRNA formyltransferase (320 aa).

111–114 (SLLP) is a (6S)-5,6,7,8-tetrahydrofolate binding site.

The protein belongs to the Fmt family.

It carries out the reaction L-methionyl-tRNA(fMet) + (6R)-10-formyltetrahydrofolate = N-formyl-L-methionyl-tRNA(fMet) + (6S)-5,6,7,8-tetrahydrofolate + H(+). Its function is as follows. Attaches a formyl group to the free amino group of methionyl-tRNA(fMet). The formyl group appears to play a dual role in the initiator identity of N-formylmethionyl-tRNA by promoting its recognition by IF2 and preventing the misappropriation of this tRNA by the elongation apparatus. This Methylacidiphilum infernorum (isolate V4) (Methylokorus infernorum (strain V4)) protein is Methionyl-tRNA formyltransferase.